The primary structure comprises 632 residues: MLYHETFDVIVVGGGHAGTEAALASARTGQKTLLLTHNIDTLGQMSCNPAIGGIGKGHLVKEVDAMGGLMAQAIDHAGIQFRTLNASKGPAVRATRAQADRALYKAYVRDFLENAPNLTLFQQAVDDLIVEQDQVRGVITQMGLKFHAKAVVLTVGTFLGGKIHIGLQSSSGGRAGDPPSIALADRLRELPFRVDRLKTGTPPRIDARSVDFSVLEAQHGDNPTPVFSFMGDRTHHPRQIPCFITHTNEQTHEVIRNNLDRSPMYAGIIEGIGPRYCPSIEDKVMRFADKNSHQIFIEPEGLTTHELYPNGISTSLPFDVQVQIVRSMKGFENAHIVRPGYAIEYDFFDPRDLKQTYETKFIQGLFFAGQINGTTGYEEAAAQGLMAGLNASLFSQEKEGWSPRRDQAYMGVLIDDLSTMGTKEPYRMFTSRAEHRLLLREDNADLRLTEKARELGLVDDARWARFNQKIDNMEQERQRLKSTWMNPASTGIDELNQLLKTPMNREASGEDLLRRPEMTYDQLTSLTAFAPAIDDLEAAEQVEIQVKYEGYIKRQQDEIEKSLRHEHTKLPADLDYSDVKGLSNEVVLKLNTAKPETLGIASRISGITPAAISILLVHLKKIGMLKVGEENA.

FAD-binding positions include 13–18 (GGGHAG), Val125, and Ser180. 273–287 (GPRYCPSIEDKVMRF) lines the NAD(+) pocket. Gln370 is a binding site for FAD.

The protein belongs to the MnmG family. Homodimer. Heterotetramer of two MnmE and two MnmG subunits. FAD serves as cofactor.

Its subcellular location is the cytoplasm. NAD-binding protein involved in the addition of a carboxymethylaminomethyl (cmnm) group at the wobble position (U34) of certain tRNAs, forming tRNA-cmnm(5)s(2)U34. The sequence is that of tRNA uridine 5-carboxymethylaminomethyl modification enzyme MnmG from Vibrio vulnificus (strain YJ016).